We begin with the raw amino-acid sequence, 429 residues long: Adenylosuccinate synthetase (429 aa).

Residues glycine 12 to lysine 18 and glycine 40 to threonine 42 contribute to the GTP site. Aspartate 13 (proton acceptor) is an active-site residue. Mg(2+) is bound by residues aspartate 13 and glycine 40. IMP is bound by residues aspartate 13–lysine 16, asparagine 38–histidine 41, threonine 128, arginine 142, glutamine 223, threonine 238, and arginine 302. Residue histidine 41 is the Proton donor of the active site. A substrate-binding site is contributed by threonine 298–arginine 304. Residues arginine 304, cysteine 330–aspartate 332, and serine 412–glycine 414 contribute to the GTP site.

The protein belongs to the adenylosuccinate synthetase family. As to quaternary structure, homodimer. It depends on Mg(2+) as a cofactor.

The protein localises to the cytoplasm. The enzyme catalyses IMP + L-aspartate + GTP = N(6)-(1,2-dicarboxyethyl)-AMP + GDP + phosphate + 2 H(+). The protein operates within purine metabolism; AMP biosynthesis via de novo pathway; AMP from IMP: step 1/2. In terms of biological role, plays an important role in the de novo pathway of purine nucleotide biosynthesis. Catalyzes the first committed step in the biosynthesis of AMP from IMP. In Lactiplantibacillus plantarum (strain ATCC BAA-793 / NCIMB 8826 / WCFS1) (Lactobacillus plantarum), this protein is Adenylosuccinate synthetase.